A 112-amino-acid chain; its full sequence is uncharacterized protein (112 aa).

Residues 89-106 (TLYVLVIVGLTILCFLLV) traverse the membrane as a helical segment.

It belongs to the IIV-6 466R family.

Its subcellular location is the membrane. This is an uncharacterized protein from Aedes vexans (Inland floodwater mosquito).